The following is a 389-amino-acid chain: Growth/differentiation factor 2 (389 aa).

Positions 1-20 (MWRVGHLLLLMSIVFRITEE) are cleaved as a signal peptide. Residues 21-280 (KSLGDAGSLE…PVSNRHRRRK (260 aa)) constitute a propeptide that is removed on maturation. N-linked (GlcNAc...) asparagine glycosylation is found at N65, N118, N127, and N232. The segment covering 263 to 272 (QQQVGNQAPV) has biased composition (polar residues). A disordered region spans residues 263 to 284 (QQQVGNQAPVSNRHRRRKRKAK). The span at 274–284 (NRHRRRKRKAK) shows a compositional bias: basic residues. 3 cysteine pairs are disulfide-bonded: C288-C354, C317-C386, and C321-C388. An N-linked (GlcNAc...) asparagine glycan is attached at N342.

It belongs to the TGF-beta family. In terms of assembly, homodimer; disulfide-linked. Post-translationally, a reversible disulfide bond can be formed between the two subunits in the homodimer; this has no effect on gdf2 activity.

It is found in the secreted. Potent circulating inhibitor of angiogenesis. Signals through the type I activin receptor ACVRL1 but not other Alks. Signaling through SMAD1 in endothelial cells requires TGF-beta coreceptor endoglin/eng. In Danio rerio (Zebrafish), this protein is Growth/differentiation factor 2 (gdf2).